The sequence spans 170 residues: Protein-lysine myristoyltransferase HlyC (170 aa).

Residues H23 and D92 contribute to the active site. H151 serves as a coordination point for heme.

It belongs to the RTX toxin acyltransferase family. Monomer. Proteolytically cleaved by the protease systems ClpAP, ClpXP and FtsH, leading to its degradation.

It is found in the cytoplasm. It catalyses the reaction tetradecanoyl-[ACP] + L-lysyl-[protein] = N(6)-tetradecanoyl-L-lysyl-[protein] + holo-[ACP] + H(+). The acyltransferase activity is inhibited by heme. Its function is as follows. Protein-lysine myristoyltransferase that catalyzes myristoylation of the protoxin (HlyA) at two internal lysine residues, thereby converting it to the active toxin. In Escherichia coli, this protein is Protein-lysine myristoyltransferase HlyC.